The following is a 420-amino-acid chain: Transcription factor TCP4 (420 aa).

A disordered region spans residues 1-27; the sequence is MSDDQFHHPPPPSSMRHRSTSDAADGG. One can recognise a TCP domain in the interval 45 to 103; the sequence is RKDRHSKVCTAKGPRDRRVRLSAHTAIQFYDVQDRLGFDRPSKAVDWLIKKAKTSIDEL. 4 disordered regions span residues 121-176, 228-256, 353-379, and 399-420; these read NAKP…PSMD, LSLQ…ASEP, HQSI…IPGI, and QEEE…ISRH. A compositionally biased stretch (polar residues) spans 410 to 420; sequence KPSSASSISRH.

As to quaternary structure, interacts with AHL27 and AHL29. Interacts with SPL. Interacts with JGB. Interacts with GI (via N-terminus). As to expression, expressed in cotyledons, particularly in the vascular region, in leaves, roots, buds, flowers and immature siliques.

The protein resides in the nucleus. Transcription factor playing a pivotal role in the control of morphogenesis of shoot organs by negatively regulating the expression of boundary-specific genes such as CUC genes, probably through the induction of miRNA (e.g. miR164). Required during early steps of embryogenesis. Participates in ovule development. Activates LOX2 expression by binding to the 5'-GGACCA-3' motif found in its promoter. Activates YUC5 transcription by binding to the 5'-GTGGGCCA-3' motif found in its promoter. Through the activation of YUC5 transcription, integrates the auxin response to a brassinosteroid-dependent molecular circuit that promotes cell elongation in hypocotyls. Activates GIS transcription by binding to the 5'-TGGTCC-3' motif found in its promoter. Involved in the regulation of trichome branching through the activation of GIS transcription. Activates CO transcription by binding to the 5'-GGACCAC-3' motif found in its promoter. Involved in the regulation of photoperiodic flowering through the activation of CO transcription. Activates TCL1 and TCL2 transcription by binding to the 5'-TGGCCA-3' and 5'-GTGGACCA-3' motifS found in their respective promoters. Involved in the suppression of trichome initiaition through the activation of TCL1 and TCL2 transcription. Activates HAT2 transcription by binding to the 5'-TGGTCCAC-3' motif found in its promoter. Through the activation of HAT2 transcription, involved in the auxin-independent reprogramming of mitotic cells to exit division and acquire differentiation competence within the transition zone. In Arabidopsis thaliana (Mouse-ear cress), this protein is Transcription factor TCP4 (TCP4).